The chain runs to 369 residues: Protein disulfide-isomerase erp38 (369 aa).

An N-terminal signal peptide occupies residues 1–18 (MVLLKSLVVASLAAAVAA). Thioredoxin domains are found at residues 19–130 (KSAV…EKTG) and 131–251 (VKAR…EKAG). Catalysis depends on nucleophile residues Cys50, Cys53, Cys170, and Cys173. 2 cysteine pairs are disulfide-bonded: Cys50–Cys53 and Cys170–Cys173. Residues 366–369 (KEEL) carry the Prevents secretion from ER motif.

Belongs to the protein disulfide isomerase family.

It localises to the endoplasmic reticulum lumen. The catalysed reaction is Catalyzes the rearrangement of -S-S- bonds in proteins.. The chain is Protein disulfide-isomerase erp38 (erp38) from Neurospora crassa (strain ATCC 24698 / 74-OR23-1A / CBS 708.71 / DSM 1257 / FGSC 987).